The following is a 239-amino-acid chain: Tetrahydromethanopterin S-methyltransferase subunit A (239 aa).

At 1-215 the chain is on the cytoplasmic side; the sequence is MADKKAPAAG…EAAMIAKFNS (215 aa). His85 provides a ligand contact to 5-hydroxybenzimidazolylcob(I)amide. The chain crosses the membrane as a helical span at residues 216-238; it reads GYYNGKIQGIAIGLFLSIVIFSL. Position 239 (Leu239) is a topological domain, extracellular.

It belongs to the MtrA family. In terms of assembly, the complex is composed of 8 subunits; MtrA, MtrB, MtrC, MtrD, MtrE, MtrF, MtrG and MtrH. It depends on 5-hydroxybenzimidazolylcob(I)amide as a cofactor.

The protein resides in the cell membrane. The catalysed reaction is 5-methyl-5,6,7,8-tetrahydromethanopterin + coenzyme M + 2 Na(+)(in) = 5,6,7,8-tetrahydromethanopterin + methyl-coenzyme M + 2 Na(+)(out). It participates in one-carbon metabolism; methanogenesis from CO(2); methyl-coenzyme M from 5,10-methylene-5,6,7,8-tetrahydromethanopterin: step 2/2. In terms of biological role, part of a complex that catalyzes the formation of methyl-coenzyme M and tetrahydromethanopterin from coenzyme M and methyl-tetrahydromethanopterin. This is an energy-conserving, sodium-ion translocating step. This is Tetrahydromethanopterin S-methyltransferase subunit A from Methanococcus maripaludis (strain DSM 14266 / JCM 13030 / NBRC 101832 / S2 / LL).